The chain runs to 298 residues: GTP cyclohydrolase FolE2 (298 aa).

This sequence belongs to the GTP cyclohydrolase IV family.

It catalyses the reaction GTP + H2O = 7,8-dihydroneopterin 3'-triphosphate + formate + H(+). It participates in cofactor biosynthesis; 7,8-dihydroneopterin triphosphate biosynthesis; 7,8-dihydroneopterin triphosphate from GTP: step 1/1. Functionally, converts GTP to 7,8-dihydroneopterin triphosphate. The polypeptide is GTP cyclohydrolase FolE2 (Xylella fastidiosa (strain M23)).